The primary structure comprises 129 residues: Small ribosomal subunit protein uS11 (129 aa).

It belongs to the universal ribosomal protein uS11 family. Part of the 30S ribosomal subunit. Interacts with proteins S7 and S18. Binds to IF-3.

Functionally, located on the platform of the 30S subunit, it bridges several disparate RNA helices of the 16S rRNA. Forms part of the Shine-Dalgarno cleft in the 70S ribosome. This chain is Small ribosomal subunit protein uS11, found in Maricaulis maris (strain MCS10) (Caulobacter maris).